A 304-amino-acid polypeptide reads, in one-letter code: Tritrans,polycis-undecaprenyl-diphosphate synthase (geranylgeranyl-diphosphate specific) (304 aa).

The active site involves Asp33. Asp33 provides a ligand contact to Mg(2+). Substrate-binding positions include Gly34–Arg37, Lys46, His50, and Ser78–Glu80. Asn81 (proton acceptor) is an active-site residue. Substrate contacts are provided by residues Phe82, Arg84, Arg203, and Arg209–Ser211.

It belongs to the UPP synthase family. As to quaternary structure, homodimer. Mg(2+) serves as cofactor.

The catalysed reaction is geranylgeranyl diphosphate + 7 isopentenyl diphosphate = tri-trans,hepta-cis-undecaprenyl diphosphate + 7 diphosphate. Catalyzes the sequential condensation of isopentenyl diphosphate (IPP) with geranylgeranyl diphosphate (GGPP) to yield (2Z,6Z,10Z,14Z,18Z,22Z,26Z,30E,34E,38E)-undecaprenyl diphosphate (tritrans,heptacis-UPP). It is probably the precursor of glycosyl carrier lipids. The protein is Tritrans,polycis-undecaprenyl-diphosphate synthase (geranylgeranyl-diphosphate specific) of Haloarcula marismortui (strain ATCC 43049 / DSM 3752 / JCM 8966 / VKM B-1809) (Halobacterium marismortui).